A 322-amino-acid polypeptide reads, in one-letter code: Uracil-DNA glycosylase (322 aa).

The active-site Proton acceptor is the Asp142.

The protein belongs to the uracil-DNA glycosylase (UDG) superfamily. UNG family.

Its subcellular location is the mitochondrion. It is found in the nucleus. It carries out the reaction Hydrolyzes single-stranded DNA or mismatched double-stranded DNA and polynucleotides, releasing free uracil.. In terms of biological role, excises uracil residues from the DNA which can arise as a result of misincorporation of dUMP residues by DNA polymerase or due to deamination of cytosine. The sequence is that of Uracil-DNA glycosylase (ung1) from Schizosaccharomyces pombe (strain 972 / ATCC 24843) (Fission yeast).